A 2443-amino-acid chain; its full sequence is NFX1-type zinc finger-containing protein 1 homolog (2443 aa).

Disordered regions lie at residues 212–339 (PHKQ…EGDH), 545–566 (SSDS…NVYG), and 583–672 (HRDN…FVSP). Low complexity predominate over residues 246-263 (ISISNSSPPGLSSVSPIP). A compositionally biased stretch (pro residues) spans 275 to 294 (PQPPGLSIPAPPGISLPTPP). Residues 297 to 310 (SLQNHQNDQFEQAH) are compositionally biased toward polar residues. Positions 311-322 (STISRMSENSSS) are enriched in low complexity. Residues 545 to 564 (SSDSGRQVLSESRGAGSSNV) show a composition bias toward polar residues. Basic and acidic residues-rich tracts occupy residues 601–638 (GEVH…RRDQ) and 662–672 (EHSRDDKFVSP). In terms of domain architecture, UvrD-like helicase ATP-binding spans 1040–1545 (MDESQRLAFC…MNLTISDKIV (506 aa)). 1061 to 1068 (GPPGTGKT) contacts ATP. NF-X1-type zinc fingers lie at residues 1769 to 1791 (CGHV…RCLY), 1853 to 1873 (CGHA…ECSQ), 1912 to 1930 (CPHK…ECME), and 2027 to 2044 (CGHT…PCKA).

Belongs to the ZNFX1 family. In terms of assembly, interacts with ego-1, csr-1, wago-1 and prg-1. Interacts with wago-4; the interaction promotes the transmission of epigenetic information across generations. In terms of tissue distribution, expressed in germs cells. Not expressed in somatic tissues.

Its subcellular location is the cytoplasm. It localises to the perinuclear region. The protein resides in the cytoplasmic granule. The catalysed reaction is ATP + H2O = ADP + phosphate + H(+). Epigenetic inheritance factor which, in association with the Argonaute protein wago-4, mediates small RNA-directed transgenerational epigenetic inheritance and thus balances the transgenerational inheritance of epigenetic information. Specifically, maintains a balanced production of small RNAs by preventing the spread of epigenetic signals towards the 5'-end of target mRNAs. Plays a role in small RNA-induced gene silencing in the germline. The protein is NFX1-type zinc finger-containing protein 1 homolog of Caenorhabditis elegans.